A 152-amino-acid chain; its full sequence is Ribosomal RNA large subunit methyltransferase H (152 aa).

S-adenosyl-L-methionine-binding positions include Leu71, Gly101, and 120–125 (LSKLTF).

The protein belongs to the RNA methyltransferase RlmH family. Homodimer.

The protein localises to the cytoplasm. It catalyses the reaction pseudouridine(1915) in 23S rRNA + S-adenosyl-L-methionine = N(3)-methylpseudouridine(1915) in 23S rRNA + S-adenosyl-L-homocysteine + H(+). Specifically methylates the pseudouridine at position 1915 (m3Psi1915) in 23S rRNA. The polypeptide is Ribosomal RNA large subunit methyltransferase H (Thermosipho melanesiensis (strain DSM 12029 / CIP 104789 / BI429)).